The sequence spans 350 residues: uncharacterized protein (350 aa).

One can recognise an OBG-type G domain in the interval P171–I334. Residues G177–S184, D219–L223, and N286–D289 each bind GTP.

This sequence belongs to the TRAFAC class OBG-HflX-like GTPase superfamily. OBG GTPase family. NOG subfamily.

This is an uncharacterized protein from Methanocaldococcus jannaschii (strain ATCC 43067 / DSM 2661 / JAL-1 / JCM 10045 / NBRC 100440) (Methanococcus jannaschii).